The sequence spans 102 residues: Integration host factor subunit alpha (102 aa).

Belongs to the bacterial histone-like protein family. In terms of assembly, heterodimer of an alpha and a beta chain.

Functionally, this protein is one of the two subunits of integration host factor, a specific DNA-binding protein that functions in genetic recombination as well as in transcriptional and translational control. The protein is Integration host factor subunit alpha of Chromohalobacter salexigens (strain ATCC BAA-138 / DSM 3043 / CIP 106854 / NCIMB 13768 / 1H11).